The primary structure comprises 608 residues: UvrABC system protein C (608 aa).

One can recognise a GIY-YIG domain in the interval 15–93 (HQPGVYRMYN…IKQYLPKYNV (79 aa)). The 36-residue stretch at 203–238 (RQVIQTLVKQMESASQSLNFEKAAIIRDQIQAMRRV) folds into the UVR domain.

Belongs to the UvrC family. As to quaternary structure, interacts with UvrB in an incision complex.

The protein localises to the cytoplasm. Its function is as follows. The UvrABC repair system catalyzes the recognition and processing of DNA lesions. UvrC both incises the 5' and 3' sides of the lesion. The N-terminal half is responsible for the 3' incision and the C-terminal half is responsible for the 5' incision. This chain is UvrABC system protein C, found in Aliivibrio fischeri (strain ATCC 700601 / ES114) (Vibrio fischeri).